A 236-amino-acid chain; its full sequence is MSTGLLAKKVGMTQIFTPEGDCVPVTVLEAGPCTVVRRKTAEKDGYDAVVIGFGVVDEKHAHRLSKPEVGVFKKAGTPIFRHVKEIRVKDAKLLGDLKAGDVLTVDKVFKANQRIDVAGVTKGRGFTGVMKRWNMKGAARDSSTAHEHHRHVGAIGQRKTPGKVWKGKHLPGHYGVDNITIQNLTVVGIEPEQNVLLVSGAVPGHADGLLFVNTAAKGQPRIKQKQEVRERAKPKV.

It belongs to the universal ribosomal protein uL3 family. As to quaternary structure, part of the 50S ribosomal subunit. Forms a cluster with proteins L14 and L19.

Functionally, one of the primary rRNA binding proteins, it binds directly near the 3'-end of the 23S rRNA, where it nucleates assembly of the 50S subunit. In Anaeromyxobacter dehalogenans (strain 2CP-C), this protein is Large ribosomal subunit protein uL3.